We begin with the raw amino-acid sequence, 94 residues long: MSEQNSRPQNSERPQRSRRPQGGPRRRRKVDYIAANHIEFIDYKNTELLERFISERGKILPRRVTGTSAKNQRKVTTAIKRARIMALLPFVTED.

Residues 1–12 (MSEQNSRPQNSE) show a composition bias toward low complexity. The interval 1–29 (MSEQNSRPQNSERPQRSRRPQGGPRRRRK) is disordered. The segment covering 16–29 (RSRRPQGGPRRRRK) has biased composition (basic residues).

Belongs to the bacterial ribosomal protein bS18 family. Part of the 30S ribosomal subunit. Forms a tight heterodimer with protein bS6.

Binds as a heterodimer with protein bS6 to the central domain of the 16S rRNA, where it helps stabilize the platform of the 30S subunit. The chain is Small ribosomal subunit protein bS18 from Leuconostoc citreum (strain KM20).